Reading from the N-terminus, the 159-residue chain is Large ribosomal subunit protein eL29 (159 aa).

Positions 1–26 (MAKSKNHTTHNQSRKWHRNGIKKPRS) are enriched in basic residues. The tract at residues 1-32 (MAKSKNHTTHNQSRKWHRNGIKKPRSQRYESL) is disordered. K5 carries the post-translational modification N6-methyllysine. S31 bears the Phosphoserine mark. An N6-acetyllysine modification is found at K33. Basic residues predominate over residues 117–127 (RLCRPKAKAKA). The segment at 117–159 (RLCRPKAKAKAKAKDQTKAQAAAPASVPAQAPKRTQAPTKASE) is disordered. A compositionally biased stretch (low complexity) spans 134–149 (KAQAAAPASVPAQAPK). S142 bears the Phosphoserine mark.

Belongs to the eukaryotic ribosomal protein eL29 family. As to quaternary structure, component of the large ribosomal subunit.

Its subcellular location is the cytoplasm. Component of the large ribosomal subunit. The ribosome is a large ribonucleoprotein complex responsible for the synthesis of proteins in the cell. The sequence is that of Large ribosomal subunit protein eL29 (RPL29) from Homo sapiens (Human).